A 276-amino-acid chain; its full sequence is Undecaprenyl-diphosphatase (276 aa).

The next 6 membrane-spanning stretches (helical) occupy residues 43–63 (RAMA…VWEF), 85–105 (GNLL…ADLI), 109–129 (LFNP…MLWA), 183–203 (AATE…AVYS), 214–234 (GDLP…MIAV), and 249–269 (FAWY…FGWV).

Belongs to the UppP family.

Its subcellular location is the cell inner membrane. The catalysed reaction is di-trans,octa-cis-undecaprenyl diphosphate + H2O = di-trans,octa-cis-undecaprenyl phosphate + phosphate + H(+). Functionally, catalyzes the dephosphorylation of undecaprenyl diphosphate (UPP). Confers resistance to bacitracin. This chain is Undecaprenyl-diphosphatase, found in Pseudomonas putida (strain ATCC 700007 / DSM 6899 / JCM 31910 / BCRC 17059 / LMG 24140 / F1).